The chain runs to 547 residues: Chaperonin GroEL (547 aa).

Residues 30 to 33 (TLGP), Lys51, 87 to 91 (DGTTT), Gly415, and Asp495 contribute to the ATP site.

This sequence belongs to the chaperonin (HSP60) family. Forms a cylinder of 14 subunits composed of two heptameric rings stacked back-to-back. Interacts with the co-chaperonin GroES.

Its subcellular location is the cytoplasm. The catalysed reaction is ATP + H2O + a folded polypeptide = ADP + phosphate + an unfolded polypeptide.. Its function is as follows. Together with its co-chaperonin GroES, plays an essential role in assisting protein folding. The GroEL-GroES system forms a nano-cage that allows encapsulation of the non-native substrate proteins and provides a physical environment optimized to promote and accelerate protein folding. The protein is Chaperonin GroEL of Shewanella halifaxensis (strain HAW-EB4).